Reading from the N-terminus, the 130-residue chain is Histone H2A type 3 (130 aa).

Positions 1 to 22 are disordered; that stretch reads MSGRGKQGGKARAKAKSRSSRA. Ser2 is subject to N-acetylserine. A Phosphoserine; by RPS6KA5 modification is found at Ser2. At Arg4 the chain carries Citrulline; alternate. Residue Arg4 is modified to Symmetric dimethylarginine; by PRMT5; alternate. Lys6 carries the post-translational modification N6-(2-hydroxyisobutyryl)lysine. Residues 7–19 show a composition bias toward basic residues; the sequence is QGGKARAKAKSRS. An N6-(2-hydroxyisobutyryl)lysine; alternate modification is found at Lys10. Lys10 and Lys14 each carry N6-(beta-hydroxybutyryl)lysine; alternate. Position 10 is an N6-lactoyllysine; alternate (Lys10). Lys10 carries the N6-succinyllysine; alternate modification. Lys14 participates in a covalent cross-link: Glycyl lysine isopeptide (Lys-Gly) (interchain with G-Cter in ubiquitin); alternate. Lys16 participates in a covalent cross-link: Glycyl lysine isopeptide (Lys-Gly) (interchain with G-Cter in ubiquitin). Lys37 carries the N6-(2-hydroxyisobutyryl)lysine; alternate modification. Lys37 carries the post-translational modification N6-(beta-hydroxybutyryl)lysine; alternate. At Lys37 the chain carries N6-crotonyllysine; alternate. Lys75 and Lys76 each carry N6-(2-hydroxyisobutyryl)lysine. At Lys96 the chain carries N6-(2-hydroxyisobutyryl)lysine; alternate. Lys96 carries the N6-(beta-hydroxybutyryl)lysine; alternate modification. The residue at position 96 (Lys96) is an N6-succinyllysine; alternate. Lys96 is modified (N6-glutaryllysine; alternate). At Gln105 the chain carries N5-methylglutamine. Lys119 is subject to N6-(2-hydroxyisobutyryl)lysine; alternate. An N6-(beta-hydroxybutyryl)lysine; alternate modification is found at Lys119. Lys119 and Lys120 each carry N6-crotonyllysine; alternate. Lys119 and Lys120 each carry N6-glutaryllysine; alternate. Lys120 is covalently cross-linked (Glycyl lysine isopeptide (Lys-Gly) (interchain with G-Cter in ubiquitin); alternate). A Phosphothreonine; by DCAF1 modification is found at Thr121. Lys126 carries the N6-crotonyllysine; alternate modification. Residue Lys126 is modified to N6-glutaryllysine; alternate.

This sequence belongs to the histone H2A family. As to quaternary structure, the nucleosome is a histone octamer containing two molecules each of H2A, H2B, H3 and H4 assembled in one H3-H4 heterotetramer and two H2A-H2B heterodimers. The octamer wraps approximately 147 bp of DNA. Deiminated on Arg-4 in granulocytes upon calcium entry. Post-translationally, monoubiquitination of Lys-120 (H2AK119Ub) by RING1, TRIM37 and RNF2/RING2 complex gives a specific tag for epigenetic transcriptional repression and participates in X chromosome inactivation of female mammals. It is involved in the initiation of both imprinted and random X inactivation. Ubiquitinated H2A is enriched in inactive X chromosome chromatin. Ubiquitination of H2A functions downstream of methylation of 'Lys-27' of histone H3 (H3K27me). H2AK119Ub by RNF2/RING2 can also be induced by ultraviolet and may be involved in DNA repair. Monoubiquitination of Lys-120 (H2AK119Ub) by TRIM37 may promote transformation of cells in a number of breast cancers. Following DNA double-strand breaks (DSBs), it is ubiquitinated through 'Lys-63' linkage of ubiquitin moieties by the E2 ligase UBE2N and the E3 ligases RNF8 and RNF168, leading to the recruitment of repair proteins to sites of DNA damage. Ubiquitination at Lys-14 and Lys-16 (H2AK13Ub and H2AK15Ub, respectively) in response to DNA damage is initiated by RNF168 that mediates monoubiquitination at these 2 sites, and 'Lys-63'-linked ubiquitin are then conjugated to monoubiquitin; RNF8 is able to extend 'Lys-63'-linked ubiquitin chains in vitro. Deubiquitinated by USP51 at Lys-14 and Lys-16 (H2AK13Ub and H2AK15Ub, respectively) after damaged DNA is repaired. H2AK119Ub and ionizing radiation-induced 'Lys-63'-linked ubiquitination (H2AK13Ub and H2AK15Ub) are distinct events. In terms of processing, phosphorylation on Ser-2 (H2AS1ph) is enhanced during mitosis. Phosphorylation on Ser-2 by RPS6KA5/MSK1 directly represses transcription. Acetylation of H3 inhibits Ser-2 phosphorylation by RPS6KA5/MSK1. Phosphorylation at Thr-121 (H2AT120ph) by DCAF1 is present in the regulatory region of many tumor suppresor genes and down-regulates their transcription. Glutamine methylation at Gln-105 (H2AQ104me) by FBL is specifically dedicated to polymerase I. It is present at 35S ribosomal DNA locus and impairs binding of the FACT complex. Post-translationally, symmetric dimethylation on Arg-4 by the PRDM1/PRMT5 complex may play a crucial role in the germ-cell lineage. In terms of processing, crotonylation (Kcr) is specifically present in male germ cells and marks testis-specific genes in post-meiotic cells, including X-linked genes that escape sex chromosome inactivation in haploid cells. Crotonylation marks active promoters and enhancers and confers resistance to transcriptional repressors. It is also associated with post-meiotically activated genes on autosomes. Lactylated in macrophages by EP300/P300 by using lactoyl-CoA directly derived from endogenous or exogenous lactate, leading to stimulates gene transcription.

The protein localises to the nucleus. It localises to the chromosome. Core component of nucleosome. Nucleosomes wrap and compact DNA into chromatin, limiting DNA accessibility to the cellular machineries which require DNA as a template. Histones thereby play a central role in transcription regulation, DNA repair, DNA replication and chromosomal stability. DNA accessibility is regulated via a complex set of post-translational modifications of histones, also called histone code, and nucleosome remodeling. The protein is Histone H2A type 3 of Homo sapiens (Human).